The chain runs to 263 residues: uncharacterized protein (263 aa).

31 to 38 serves as a coordination point for ATP; sequence GPTGSGKT.

It belongs to the CbbQ/NirQ/NorQ/GpvN family.

This is an uncharacterized protein from Staphylococcus aureus (strain NCTC 8325 / PS 47).